The primary structure comprises 48 residues: Delta-stichotoxin-Hcr1b (48 aa).

3 disulfide bridges follow: Cys-3–Cys-43, Cys-5–Cys-33, and Cys-26–Cys-44.

Belongs to the sea anemone sodium channel inhibitory toxin family. Type II subfamily.

The protein resides in the secreted. Its subcellular location is the nematocyst. Its function is as follows. Binds to site 3 of voltage-gated sodium channels and inhibits the inactivation process. This is Delta-stichotoxin-Hcr1b from Radianthus crispa (Leathery sea anemone).